The sequence spans 1607 residues: MTGGGRAALALQPRGRLWPLLAVLAAVAGCVRAAMDECADEGGRPQRCMPEFVNAAFNVTVVATNTCGTPPEEYCVQTGVTGVTKSCHLCDAGQQHLQHGAAFLTDYNNQADTTWWQSQTMLAGVQYPNSINLTLHLGKAFDITYVRLKFHTSRPESFAIYKRTREDGPWIPYQYYSGSCENTYSKANRGFIRTGGDEQQALCTDEFSDISPLTGGNVAFSTLEGRPSAYNFDNSPVLQEWVTATDIRVTLNRLNTFGDEVFNEPKVLKSYYYAISDFAVGGRCKCNGHASECVKNEFDKLMCNCKHNTYGVDCEKCLPFFNDRPWRRATAESASESLPCDCNGRSQECYFDPELYRSTGHGGHCTNCRDNTDGAKCERCRENFFRLGNTEACSPCHCSPVGSLSTQCDSYGRCSCKPGVMGDKCDRCQPGFHSLTEAGCRPCSCDLRGSTDECNVETGRCVCKDNVEGFNCERCKPGFFNLESSNPKGCTPCFCFGHSSVCTNAVGYSVYDISSTFQIDEDGWRVEQRDGSEASLEWSSDRQDIAVISDSYFPRYFIAPVKFLGNQVLSYGQNLSFSFRVDRRDTRLSAEDLVLEGAGLRVSVPLIAQGNSYPSETTVKYIFRLHEATDYPWRPALSPFEFQKLLNNLTSIKIRGTYSERTAGYLDDVTLQSARPGPGVPATWVESCTCPVGYGGQFCETCLPGYRRETPSLGPYSPCVLCTCNGHSETCDPETGVCDCRDNTAGPHCEKCSDGYYGDSTLGTSSDCQPCPCPGGSSCAIVPKTKEVVCTHCPTGTAGKRCELCDDGYFGDPLGSNGPVRLCRPCQCNDNIDPNAVGNCNRLTGECLKCIYNTAGFYCDRCKEGFFGNPLAPNPADKCKACACNPYGTVQQQSSCNPVTGQCQCLPHVSGRDCGTCDPGYYNLQSGQGCERCDCHALGSTNGQCDIRTGQCECQPGITGQHCERCETNHFGFGPEGCKPCDCHHEGSLSLQCKDDGRCECREGFVGNRCDQCEENYFYNRSWPGCQECPACYRLVKDKAAEHRVKLQELESLIANLGTGDDMVTDQAFEDRLKEAEREVTDLLREAQEVKDVDQNLMDRLQRVNSSLHSQISRLQNIRNTIEETGILAERARSRVESTEQLIEIASRELEKAKMAAANVSITQPESTGEPNNMTLLAEEARRLAERHKQEADDIVRVAKTANETSAEAYNLLLRTLAGENQTALEIEELNRKYEQAKNISQDLEKQAARVHEEAKRAGDKAVEIYASVAQLTPVDSEALENEANKIKKEAADLDRLIDQKLKDYEDLREDMRGKEHEVKNLLEKGKAEQQTADQLLARADAAKALAEEAAKKGRSTLQEANDILNNLKDFDRRVNDNKTAAEEALRRIPAINRTIAEANEKTREAQLALGNAAADATEAKNKAHEAERIASAVQKNATSTKADAERTFGEVTDLDNEVNGMLRQLEEAENELKRKQDDADQDMMMAGMASQAAQEAELNARKAKNSVSSLLSQLNNLLDQLGQLDTVDLNKLNEIEGSLNKAKDEMKASDLDRKVSDLESEARKQEAAIMDYNRDIAEIIKDIHNLEDIKKTLPTGCFNTPSIEKP.

The N-terminal stretch at 1-33 (MTGGGRAALALQPRGRLWPLLAVLAAVAGCVRA) is a signal peptide. The 240-residue stretch at 44-283 (RPQRCMPEFV…AISDFAVGGR (240 aa)) folds into the Laminin N-terminal domain. N-linked (GlcNAc...) asparagine glycosylation is found at Asn58 and Asn132. Intrachain disulfides connect Cys284–Cys293, Cys286–Cys303, Cys305–Cys314, Cys340–Cys349, Cys342–Cys365, Cys368–Cys377, Cys380–Cys393, Cys396–Cys408, Cys398–Cys414, Cys416–Cys425, Cys428–Cys440, Cys443–Cys454, Cys445–Cys461, Cys463–Cys472, and Cys475–Cys490. Laminin EGF-like domains follow at residues 284 to 339 (CKCN…ESLP), 340 to 395 (CDCN…ACSP), 396 to 442 (CHCS…GCRP), and 443 to 492 (CSCD…GCTP). Residues 493 to 502 (CFCFGHSSVC) enclose the Laminin EGF-like 5; first part domain. The Laminin IV type A domain maps to 512-687 (DISSTFQIDE…PGVPATWVES (176 aa)). N-linked (GlcNAc...) asparagine glycans are attached at residues Asn574 and Asn648. The Laminin EGF-like 5; second part domain occupies 688 to 721 (CTCPVGYGGQFCETCLPGYRRETPSLGPYSPCVL). Cystine bridges form between Cys722-Cys731, Cys724-Cys738, Cys740-Cys749, Cys752-Cys768, Cys771-Cys779, Cys773-Cys790, Cys793-Cys802, Cys805-Cys823, Cys826-Cys840, Cys828-Cys847, Cys850-Cys859, Cys862-Cys879, Cys882-Cys896, Cys884-Cys903, Cys905-Cys914, Cys917-Cys930, Cys933-Cys945, Cys935-Cys952, Cys954-Cys963, Cys966-Cys978, Cys981-Cys993, Cys983-Cys999, Cys1001-Cys1010, and Cys1013-Cys1026. Laminin EGF-like domains lie at 722-770 (CTCN…DCQP) and 771-825 (CPCP…LCRP). Residues 826–881 (CQCNDNIDPNAVGNCNRLTGECLKCIYNTAGFYCDRCKEGFFGNPLAPNPADKCKA) enclose the Laminin EGF-like 8; nidogen-binding domain. Laminin EGF-like domains lie at 882-932 (CACN…GCER), 933-980 (CDCH…GCKP), and 981-1028 (CDCH…GCQE). N-linked (GlcNAc...) asparagine glycosylation is found at Asn1020 and Asn1105. Residues 1029 to 1607 (CPACYRLVKD…CFNTPSIEKP (579 aa)) form a domain II and I region. A coiled-coil region spans residues 1034-1594 (RLVKDKAAEH…HNLEDIKKTL (561 aa)). Ser1147 is subject to Phosphoserine. N-linked (GlcNAc...) asparagine glycans are attached at residues Asn1159, Asn1173, Asn1203, Asn1221, Asn1239, Asn1378, Asn1393, and Asn1437. The residue at position 1491 (Ser1491) is a Phosphoserine.

Laminin is a complex glycoprotein, consisting of three different polypeptide chains (alpha, beta, gamma), which are bound to each other by disulfide bonds into a cross-shaped molecule comprising one long and three short arms with globules at each end. Gamma-1 is a subunit of laminin-1 (laminin-111 or EHS laminin), laminin-2 (laminin-211 or merosin), laminin-3 (laminin-121 or S-laminin), laminin-4 (laminin-221 or S-merosin), laminin-6 (laminin-311 or K-laminin), laminin-7 (laminin-321 or KS-laminin), laminin-8 (laminin-411), laminin-9 (laminin-421), laminin-10 (laminin-511) and laminin-11 (laminin-521). Interacts with SVEP1. As to expression, found in the basement membranes (major component).

The protein resides in the secreted. It localises to the extracellular space. It is found in the extracellular matrix. Its subcellular location is the basement membrane. Binding to cells via a high affinity receptor, laminin is thought to mediate the attachment, migration and organization of cells into tissues during embryonic development by interacting with other extracellular matrix components. The chain is Laminin subunit gamma-1 (Lamc1) from Mus musculus (Mouse).